The sequence spans 913 residues: Protein ECT2 (913 aa).

Ala2 bears the N-acetylalanine mark. 2 consecutive BRCT domains span residues 176–260 and 266–354; these read MLNL…AAVD and FKVP…MYLY. Thr359 is subject to Phosphothreonine; by PKC/PRKCI. A phosphoserine mark is found at Ser367 and Ser370. At Thr373 the chain carries Phosphothreonine. Position 376 is a phosphoserine (Ser376). 2 consecutive short sequence motifs (nuclear localization signal) follow at residues 378–382 and 401–405; these read RKRRR and PRKRP. 2 disordered regions span residues 389-415 and 427-450; these read QLSRETDLSPFPPRKRPSAEHSLSIGS and IHYGETPKSCAKSSRSSTPVPPKQ. Position 444 is a phosphothreonine; by CDK1 (Thr444). One can recognise a DH domain in the interval 452–641; it reads ARWQVAKELY…KEVMTHINED (190 aa). A Glycyl lysine isopeptide (Lys-Gly) (interchain with G-Cter in SUMO2) cross-link involves residue Lys611. The PH domain maps to 675-794; it reads RVETVSLGEH…KMLCRHVANT (120 aa). A phosphoserine mark is found at Ser716 and Ser842. A Phosphothreonine; by CDK1 modification is found at Thr846. A disordered region spans residues 853–874; that stretch reads MALSSSHSSEGRSPPSSGKLAV. Low complexity predominate over residues 856 to 870; that stretch reads SSSHSSEGRSPPSSG. 2 positions are modified to phosphoserine: Ser861 and Ser865.

Homodimer. Homooligomer. Found in the centralspindlin complex. Interacts with NR1I3. Interacts (Thr-359 phosphorylated form) with PARD6A; the interaction is observed in cancer cells. Interacts (Thr-359 phosphorylated form) with PRKCI; the interaction is observed in cancer cells. Interacts with PKP4; the interaction is observed at the midbody. Interacts with RACGAP1; the interaction is direct, occurs in a microtubule-dependent manner, occurs at anaphase and during cytokinesis, is inhibited in metaphase by phosphorylation of ECT2 on Thr-373 and is stimulated in early anaphase by dephosphorylation of ECT2 probably on Thr-373 through CDK1 activity. Interacts with PLK1; the interaction is stimulated upon its phosphorylation on Thr-444. Interacts with RHOA; the interaction results in allosteric activation of ECT2. Interacts with KIF23, PARD3, PARD6B and PRKCQ. Interacts with NEDD9/HEF1. In terms of processing, phosphorylated by PLK1 in vitro. Hyperphosphorylated during the G2 phase of the cell cycle. Phosphorylation at Thr-373 occurs during the G2/M phase, relieves its auto-inhibition status and stimulates its GEF activity. Phosphorylation at Thr-444 in G2/M phase is required for subsequent binding with PLK1 and Rho exchange activation. Dephosphorylated at the time of cytokinesis. Phosphorylation at Thr-359 is required for its transformation activity in cancer cells. Highest expression in testis. Also detectable in brain, kidney, liver and spleen.

It localises to the nucleus. It is found in the cytoplasm. The protein resides in the cytoskeleton. The protein localises to the spindle. Its subcellular location is the cleavage furrow. It localises to the midbody. It is found in the cell junction. The protein resides in the tight junction. Its activity is regulated as follows. Autoinhibited by the C-terminal PH domain which folds back and binds to the surface of the DH domain, blocking binding of RHOA to the catalytic center of the DH domain. The 2nd BRCT domain is also involved in inhibition, probably by helping to impede RHOA binding. Allosterically activated by binding of activated GTP-bound RHOA to the PH domain which stimulates the release of PH inhibition and promotes the binding of substrate RHOA to the catalytic center. Binding of phosphorylated RACGAP1 to the N-terminal BRCT domain-containing region also releases autoinhibition. In terms of biological role, guanine nucleotide exchange factor (GEF) that catalyzes the exchange of GDP for GTP. Promotes guanine nucleotide exchange on the Rho family members of small GTPases, like RHOA, RHOC, RAC1 and CDC42. Required for signal transduction pathways involved in the regulation of cytokinesis. Component of the centralspindlin complex that serves as a microtubule-dependent and Rho-mediated signaling required for the myosin contractile ring formation during the cell cycle cytokinesis. Regulates the translocation of RHOA from the central spindle to the equatorial region. Plays a role in the control of mitotic spindle assembly; regulates the activation of CDC42 in metaphase for the process of spindle fibers attachment to kinetochores before chromosome congression. Involved in the regulation of epithelial cell polarity; participates in the formation of epithelial tight junctions in a polarity complex PARD3-PARD6-protein kinase PRKCQ-dependent manner. Plays a role in the regulation of neurite outgrowth. Inhibits phenobarbital (PB)-induced NR1I3 nuclear translocation. Stimulates the activity of RAC1 through its association with the oncogenic PARD6A-PRKCI complex in cancer cells, thereby acting to coordinately drive tumor cell proliferation and invasion. Also stimulates genotoxic stress-induced RHOB activity in breast cancer cells leading to their cell death. The polypeptide is Protein ECT2 (Ect2) (Mus musculus (Mouse)).